We begin with the raw amino-acid sequence, 187 residues long: Putative lipoprotein LppJ (187 aa).

The N-terminal stretch at 1 to 28 (MPHSTADRRLRLTRQALLAAAVVPLLAG) is a signal peptide. C29 carries the N-palmitoyl cysteine lipid modification. Residue C29 is the site of S-diacylglycerol cysteine attachment.

It localises to the cell membrane. The sequence is that of Putative lipoprotein LppJ (lppJ) from Mycobacterium tuberculosis (strain CDC 1551 / Oshkosh).